Consider the following 345-residue polypeptide: Arginine N-succinyltransferase (345 aa).

Leucine 125 contributes to the succinyl-CoA binding site. The Proton donor role is filled by histidine 229.

It belongs to the arginine N-succinyltransferase family.

The enzyme catalyses succinyl-CoA + L-arginine = N(2)-succinyl-L-arginine + CoA + H(+). Its pathway is amino-acid degradation; L-arginine degradation via AST pathway; L-glutamate and succinate from L-arginine: step 1/5. Functionally, catalyzes the transfer of succinyl-CoA to arginine to produce N(2)-succinylarginine. The sequence is that of Arginine N-succinyltransferase from Yersinia enterocolitica serotype O:8 / biotype 1B (strain NCTC 13174 / 8081).